Consider the following 586-residue polypeptide: Urease subunit alpha (586 aa).

The Urease domain occupies 134 to 586; the sequence is GAIDTHIHFI…LPMAQRYFLF (453 aa). Residues histidine 139, histidine 141, and lysine 222 each coordinate Ni(2+). Lysine 222 is modified (N6-carboxylysine). Histidine 224 is a binding site for substrate. Ni(2+) contacts are provided by histidine 251 and histidine 277. Histidine 325 acts as the Proton donor in catalysis. Residue aspartate 365 participates in Ni(2+) binding.

The protein belongs to the metallo-dependent hydrolases superfamily. Urease alpha subunit family. Heterotrimer of UreA (gamma), UreB (beta) and UreC (alpha) subunits. Three heterotrimers associate to form the active enzyme. Ni cation is required as a cofactor. Post-translationally, carboxylation allows a single lysine to coordinate two nickel ions.

It localises to the cytoplasm. The catalysed reaction is urea + 2 H2O + H(+) = hydrogencarbonate + 2 NH4(+). It functions in the pathway nitrogen metabolism; urea degradation; CO(2) and NH(3) from urea (urease route): step 1/1. The polypeptide is Urease subunit alpha (Gloeothece citriformis (strain PCC 7424) (Cyanothece sp. (strain PCC 7424))).